We begin with the raw amino-acid sequence, 186 residues long: ATP synthase subunit delta (186 aa).

Belongs to the ATPase delta chain family. In terms of assembly, F-type ATPases have 2 components, F(1) - the catalytic core - and F(0) - the membrane proton channel. F(1) has five subunits: alpha(3), beta(3), gamma(1), delta(1), epsilon(1). F(0) has three main subunits: a(1), b(2) and c(10-14). The alpha and beta chains form an alternating ring which encloses part of the gamma chain. F(1) is attached to F(0) by a central stalk formed by the gamma and epsilon chains, while a peripheral stalk is formed by the delta and b chains.

It localises to the cell inner membrane. Functionally, f(1)F(0) ATP synthase produces ATP from ADP in the presence of a proton or sodium gradient. F-type ATPases consist of two structural domains, F(1) containing the extramembraneous catalytic core and F(0) containing the membrane proton channel, linked together by a central stalk and a peripheral stalk. During catalysis, ATP synthesis in the catalytic domain of F(1) is coupled via a rotary mechanism of the central stalk subunits to proton translocation. This protein is part of the stalk that links CF(0) to CF(1). It either transmits conformational changes from CF(0) to CF(1) or is implicated in proton conduction. This is ATP synthase subunit delta from Bacteroides thetaiotaomicron (strain ATCC 29148 / DSM 2079 / JCM 5827 / CCUG 10774 / NCTC 10582 / VPI-5482 / E50).